We begin with the raw amino-acid sequence, 381 residues long: MASGSMATSEEERSLRECELYVQKHNIQALLKDSIVQLCTTRPERPMAFLREYFERLEKEEARQIQCLQKTGIRTDSREDEISPPPPNPVVKGRRRRGAISAEVYTEEDAASYVRKVIPKDYKTMAALAKAIEKNVLFSHLDDNERSDIFDAMFPVSFIAGETVIQQGDEGDNFYVIDQGEMDVYVNNEWATSVGEGGSFGELALIYGTPRAATVKAKTNVKLWGIDRDSYRRILMGSTLRKRKMYEEFLSKVSILESLDKWERLTVADALEPVQFEDGQKIVVQGEPGDEFFIILEGTAAVLQRRSENEEFVEVGRLGPSDYFGEIALLMNRPRAATVVARGPLKCVKLDRPRFERVLGPCSDILKRNIQQYNSFVSLSV.

At Met1 the chain carries N-acetylmethionine. Ala2 bears the N-acetylalanine; in cAMP-dependent protein kinase type I-alpha regulatory subunit, N-terminally processed mark. The dimerization and phosphorylation stretch occupies residues 2–136; that stretch reads ASGSMATSEE…ALAKAIEKNV (135 aa). Ser3 bears the Phosphoserine mark. Residues 73–96 are disordered; that stretch reads IRTDSREDEISPPPPNPVVKGRRR. Position 75 is a phosphothreonine (Thr75). 2 positions are modified to phosphoserine: Ser77 and Ser83. Residues 96-100 carry the Pseudophosphorylation motif motif; sequence RRGAI. Ser101 carries the post-translational modification Phosphoserine. 3',5'-cyclic AMP is bound by residues 137-254, Glu202, Arg211, 255-381, Glu326, and Arg335; these read LFSH…SKVS and ILES…SLSV. The residue at position 258 (Ser258) is a Phosphoserine.

Belongs to the cAMP-dependent kinase regulatory chain family. In terms of assembly, the inactive holoenzyme is composed of two regulatory chains and two catalytic chains. Activation by cAMP releases the two active catalytic monomers and the regulatory dimer. Interacts with PRKACA and PRKACB. PRKAR1A also interacts with RFC2; the complex may be involved in cell survival. Interacts with AKAP4. Interacts with RARA; the interaction occurs in the presence of cAMP or FSH and regulates RARA transcriptional activity. Interacts with the phosphorylated form of PJA2. Interacts with PRKX; regulates this cAMP-dependent protein kinase. Interacts with CBFA2T3. Interacts with smAKAP; this interaction may target PRKAR1A to the plasma membrane. Interacts with AICDA. In terms of processing, the pseudophosphorylation site binds to the substrate-binding region of the catalytic chain, resulting in the inhibition of its activity.

It localises to the cell membrane. In terms of biological role, regulatory subunit of the cAMP-dependent protein kinases involved in cAMP signaling in cells. This Mus musculus (Mouse) protein is cAMP-dependent protein kinase type I-alpha regulatory subunit (Prkar1a).